The chain runs to 276 residues: Undecaprenyl-diphosphatase (276 aa).

Helical transmembrane passes span 1–21 (MSWLQVVVLSVLQGLTEFLPV), 39–59 (AGASFTAVCQLGTEAAVLVYF), 84–104 (YWLGWWVIIGTIPISVIGLLF), 115–135 (LWLVATAMIVFSFVIAAAEYA), 159–179 (LALVPGVSRSGATISAGLFLG), 190–210 (FLLAIPAVFASGLFSLPDAFA), 222–242 (QLLVSTVIAFVVGYAAVAWFL), and 253–273 (FVGYRIILGSVVLILLSTGVV).

The protein belongs to the UppP family.

Its subcellular location is the cell membrane. It carries out the reaction di-trans,octa-cis-undecaprenyl diphosphate + H2O = di-trans,octa-cis-undecaprenyl phosphate + phosphate + H(+). Catalyzes the dephosphorylation of undecaprenyl diphosphate (UPP). Confers resistance to bacitracin. This chain is Undecaprenyl-diphosphatase, found in Mycolicibacterium gilvum (strain PYR-GCK) (Mycobacterium gilvum (strain PYR-GCK)).